The sequence spans 83 residues: Bublin coiled-coil protein (83 aa).

Residues 1–25 (MSGPNGDLGTPVEAGAEGEEDGFGE) form a disordered region. A coiled-coil region spans residues 25–74 (EAEYAAINSMLDQINSCLDHLEEKNDHLHARLQELLESNRQTRLEFQQQL). Ser82 bears the Phosphoserine mark.

The protein belongs to the UPF0184 (EST00098) family.

It is found in the cell junction. It localises to the cytoplasm. The protein localises to the cytoskeleton. Essential for intermediate filament organization in intestinal cells, interacts with intermediate filament and regulates intestinal lumen morphology. The chain is Bublin coiled-coil protein (BBLN) from Bos taurus (Bovine).